Consider the following 339-residue polypeptide: Phenylalanine--tRNA ligase alpha subunit (339 aa).

Residue E250 participates in Mg(2+) binding.

It belongs to the class-II aminoacyl-tRNA synthetase family. Phe-tRNA synthetase alpha subunit type 1 subfamily. Tetramer of two alpha and two beta subunits. The cofactor is Mg(2+).

It localises to the cytoplasm. The catalysed reaction is tRNA(Phe) + L-phenylalanine + ATP = L-phenylalanyl-tRNA(Phe) + AMP + diphosphate + H(+). The protein is Phenylalanine--tRNA ligase alpha subunit of Parabacteroides distasonis (strain ATCC 8503 / DSM 20701 / CIP 104284 / JCM 5825 / NCTC 11152).